A 274-amino-acid polypeptide reads, in one-letter code: Bis(5'-nucleosyl)-tetraphosphatase, symmetrical (274 aa).

It belongs to the Ap4A hydrolase family.

It carries out the reaction P(1),P(4)-bis(5'-adenosyl) tetraphosphate + H2O = 2 ADP + 2 H(+). In terms of biological role, hydrolyzes diadenosine 5',5'''-P1,P4-tetraphosphate to yield ADP. The sequence is that of Bis(5'-nucleosyl)-tetraphosphatase, symmetrical from Buchnera aphidicola subsp. Acyrthosiphon pisum (strain Tuc7).